The following is a 309-amino-acid chain: Probable manganese-dependent inorganic pyrophosphatase (309 aa).

Mn(2+) is bound by residues H9, D13, D15, D75, H97, and D149.

It belongs to the PPase class C family. Mn(2+) is required as a cofactor.

The protein localises to the cytoplasm. It carries out the reaction diphosphate + H2O = 2 phosphate + H(+). The polypeptide is Probable manganese-dependent inorganic pyrophosphatase (Staphylococcus haemolyticus (strain JCSC1435)).